A 152-amino-acid polypeptide reads, in one-letter code: Mitochondrial fission 1 protein (152 aa).

N-acetylmethionine is present on Met-1. Residues 1 to 122 (MEAVLNELVS…LIDKAMKKDG (122 aa)) lie on the Cytoplasmic side of the membrane. The residue at position 10 (Ser-10) is a Phosphoserine. A TPR repeat occupies 71-104 (RDYVFYLAVGNYRLKEYEKALKYVRGLLQTEPQN). A helical transmembrane segment spans residues 123-143 (LVGMAIVGGMALGVAGLAGLI). At 144-152 (GLAVSKSKS) the chain is on the mitochondrial intermembrane side.

It belongs to the FIS1 family. Interacts with DNM1L/DLP1 through the TPR region; may form part of a larger protein complex at the endoplasmic reticulum-mitochondrial interface during mitochondrial fission. Interacts with MARCHF5. Interacts with MIEF1. Interacts with PEX11A, PEX11B and PEX11G. Post-translationally, ubiquitinated by MARCHF5.

Its subcellular location is the mitochondrion outer membrane. It localises to the peroxisome membrane. Involved in the fragmentation of the mitochondrial network and its perinuclear clustering. Plays a minor role in the recruitment and association of the fission mediator dynamin-related protein 1 (DNM1L) to the mitochondrial surface and mitochondrial fission. May not be essential for the assembly of functional fission complexes and the subsequent membrane scission event. Also mediates peroxisomal fission. May act when the products of fission are directed toward mitochondrial homeostasis, mitophagy, or apoptosis. Can induce cytochrome c release from the mitochondrion to the cytosol, ultimately leading to apoptosis. The chain is Mitochondrial fission 1 protein from Rattus norvegicus (Rat).